Reading from the N-terminus, the 169-residue chain is Ribosome maturation factor RimM (169 aa).

The 74-residue stretch at 94 to 167 (ENEFYFHEII…KITIEVMEGL (74 aa)) folds into the PRC barrel domain.

This sequence belongs to the RimM family. Binds ribosomal protein uS19.

It is found in the cytoplasm. In terms of biological role, an accessory protein needed during the final step in the assembly of 30S ribosomal subunit, possibly for assembly of the head region. Essential for efficient processing of 16S rRNA. May be needed both before and after RbfA during the maturation of 16S rRNA. It has affinity for free ribosomal 30S subunits but not for 70S ribosomes. In Listeria monocytogenes serotype 4b (strain F2365), this protein is Ribosome maturation factor RimM.